We begin with the raw amino-acid sequence, 312 residues long: Malate dehydrogenase (312 aa).

Residues 7–13 (GAAGGIG) and D34 contribute to the NAD(+) site. Substrate-binding residues include R81 and R87. NAD(+) is bound by residues N94 and 117-119 (ITN). Residues N119 and R153 each coordinate substrate. The Proton acceptor role is filled by H177. M227 lines the NAD(+) pocket.

This sequence belongs to the LDH/MDH superfamily. MDH type 1 family. As to quaternary structure, homodimer.

It carries out the reaction (S)-malate + NAD(+) = oxaloacetate + NADH + H(+). In terms of biological role, catalyzes the reversible oxidation of malate to oxaloacetate. This Escherichia coli O139:H28 (strain E24377A / ETEC) protein is Malate dehydrogenase.